Here is a 196-residue protein sequence, read N- to C-terminus: ATP-dependent Clp protease proteolytic subunit (196 aa).

The Nucleophile role is filled by Ser-101. His-126 is an active-site residue.

The protein belongs to the peptidase S14 family. In terms of assembly, component of the chloroplastic Clp protease core complex.

The protein localises to the plastid. Its subcellular location is the chloroplast stroma. It carries out the reaction Hydrolysis of proteins to small peptides in the presence of ATP and magnesium. alpha-casein is the usual test substrate. In the absence of ATP, only oligopeptides shorter than five residues are hydrolyzed (such as succinyl-Leu-Tyr-|-NHMec, and Leu-Tyr-Leu-|-Tyr-Trp, in which cleavage of the -Tyr-|-Leu- and -Tyr-|-Trp bonds also occurs).. Functionally, cleaves peptides in various proteins in a process that requires ATP hydrolysis. Has a chymotrypsin-like activity. Plays a major role in the degradation of misfolded proteins. This chain is ATP-dependent Clp protease proteolytic subunit, found in Eucalyptus globulus subsp. globulus (Tasmanian blue gum).